Reading from the N-terminus, the 467-residue chain is MPEAGPEAEPGSPRKKIFVKTYGCQMNVYDSARMVDVMAPSGYTEVDAPEDADIVILNTCHIREKAAEKVYSELGRLRELKKEKSGRGEELLIGVAGCVAQAEGEEMRRRAPVVDLVLGPQTYHRLPEYVARLANGGPGIVETEFPVDDKFASLPMAEKRKTLARGATAFLTIQEGCDKFCTFCVVPYTRGSEFSRPVARILDEARSLVDAGVREITLLGQNVNAWHGEDQAGRPATLGYLIRALAEIEGLARLRYTTSHPRDMDEELIAAHRDVPALMPYLHLPVQSGSDRILAAMNRRHDADSYHRIIGRIRAAKPDIALSSDFIVGFPGETEADFEATLDLIRTVGFAQAYSFKYSPRPGTPAATEEDQVPEEVKSERLQRLQALLGEQQLAFNAGCAGRTMPVLFDRRGRGESQLVGRSPYLQSVHIDDAPEHLFGSLVDVVIEEGHRNSLRGRLREEAAVLA.

In terms of domain architecture, MTTase N-terminal spans 15-135; that stretch reads KKIFVKTYGC…LPEYVARLAN (121 aa). [4Fe-4S] cluster is bound by residues C24, C60, C98, C177, C181, and C184. The 233-residue stretch at 163–395 folds into the Radical SAM core domain; the sequence is LARGATAFLT…QALLGEQQLA (233 aa). The TRAM domain maps to 398 to 461; it reads AGCAGRTMPV…RNSLRGRLRE (64 aa).

This sequence belongs to the methylthiotransferase family. MiaB subfamily. Monomer. [4Fe-4S] cluster is required as a cofactor.

Its subcellular location is the cytoplasm. The catalysed reaction is N(6)-dimethylallyladenosine(37) in tRNA + (sulfur carrier)-SH + AH2 + 2 S-adenosyl-L-methionine = 2-methylsulfanyl-N(6)-dimethylallyladenosine(37) in tRNA + (sulfur carrier)-H + 5'-deoxyadenosine + L-methionine + A + S-adenosyl-L-homocysteine + 2 H(+). Catalyzes the methylthiolation of N6-(dimethylallyl)adenosine (i(6)A), leading to the formation of 2-methylthio-N6-(dimethylallyl)adenosine (ms(2)i(6)A) at position 37 in tRNAs that read codons beginning with uridine. The protein is tRNA-2-methylthio-N(6)-dimethylallyladenosine synthase of Parvibaculum lavamentivorans (strain DS-1 / DSM 13023 / NCIMB 13966).